A 1501-amino-acid polypeptide reads, in one-letter code: 1-phosphatidylinositol 4,5-bisphosphate phosphodiesterase eta-2 (1501 aa).

Residues 28-47 (RGFSGLQGGRRRGRGEKGIP) form a disordered region. The segment at 75-229 (MPGPQPSAAS…WVTGLRYLMA (155 aa)) is necessary for plasma membrane localization. The PH domain occupies 121–229 (SAMQEGTQMV…WVTGLRYLMA (109 aa)). EF-hand domains are found at residues 243-278 (TRDQ…LNVN) and 279-315 (LPRQ…MSTR). The Ca(2+) site is built by Asp-256, Asn-258, Asp-260, Ser-262, and Glu-267. The PI-PLC X-box domain occupies 400-545 (QDMTQPLSHY…LKGKILVKGK (146 aa)). Residue His-415 is part of the active site. 3 residues coordinate Ca(2+): Asn-416, Glu-445, and Asp-447. The active site involves His-459. Glu-494 serves as a coordination point for Ca(2+). Substrate is bound by residues Lys-543 and Lys-545. 2 disordered regions span residues 551 to 570 (ISED…DEME) and 609 to 700 (DPND…QKKT). The span at 553 to 570 (EDAEEGEVSDEDSADEME) shows a compositional bias: acidic residues. Phosphoserine occurs at positions 561 and 565. A compositionally biased stretch (basic and acidic residues) spans 626–638 (RKAEAKKGQSKVE). The span at 662–673 (SKRKKKGSKIKK) shows a compositional bias: basic residues. Ser-676 and Ser-686 each carry phosphoserine. Positions 707-821 (LSDLVKYTKS…GYVLKPQCMC (115 aa)) constitute a PI-PLC Y-box domain. Residues Ser-734 and Arg-761 each contribute to the substrate site. Residues 821 to 950 (CQGVFNPNSE…PGYRHVYLEG (130 aa)) form the C2 domain. Positions 865, 867, 891, 920, 921, and 922 each coordinate Ca(2+). Disordered regions lie at residues 986–1073 (GSLD…RLFP), 1089–1238 (EEPA…SSND), 1273–1305 (SAAR…DELQ), and 1398–1469 (GDIT…GACS). Low complexity predominate over residues 1089–1107 (EEPALGPGLPLQAAAPTGP). Composition is skewed to basic and acidic residues over residues 1142–1151 (GGRENEEPPL) and 1215–1227 (LWQR…HRDS). The span at 1421–1439 (RRSSSRSQSRVRAIASRAR) shows a compositional bias: low complexity. Residues 1440-1463 (QAQERQQRLRGQDSRGPPEEERGT) are compositionally biased toward basic and acidic residues.

It depends on Ca(2+) as a cofactor. As to expression, specifically detected in the brain, with higher level in cerebral cortex, olfactory bulb and hippocampus (at protein level). Expressed in the pyramidal cells of the hippocampus, but also in eye and lung.

The protein localises to the cytoplasm. It is found in the cell membrane. It carries out the reaction a 1,2-diacyl-sn-glycero-3-phospho-(1D-myo-inositol-4,5-bisphosphate) + H2O = 1D-myo-inositol 1,4,5-trisphosphate + a 1,2-diacyl-sn-glycerol + H(+). Its activity is regulated as follows. Activity is stimulated by GNB1:GNG2. Functionally, the production of the second messenger molecules diacylglycerol (DAG) and inositol 1,4,5-trisphosphate (IP3) is mediated by activated phosphatidylinositol-specific phospholipase C enzymes. This phospholipase activity is very sensitive to calcium. May be important for formation and maintenance of the neuronal network in the postnatal brain. This Mus musculus (Mouse) protein is 1-phosphatidylinositol 4,5-bisphosphate phosphodiesterase eta-2.